Consider the following 681-residue polypeptide: Transferrin (681 aa).

The first 18 residues, 1-18 (MALKLLTLIALTCAAANA), serve as a signal peptide directing secretion. 2 Transferrin-like domains span residues 23 to 364 (YKLC…ERGH) and 371 to 676 (VRLC…DVIS). Disulfide bonds link C26–C60 and C35–C51. The Fe(3+) site is built by D75 and Y108. Cystine bridges form between C132/C228, C181/C207, C204/C213, and C271/C284. 4 residues coordinate hydrogencarbonate: T134, R138, V140, and G141. N218 carries N-linked (GlcNAc...) asparagine glycosylation. Residue Y222 participates in Fe(3+) binding. Residue N355 is glycosylated (N-linked (GlcNAc...) asparagine). Intrachain disulfides connect C374–C411 and C384–C402. N418 is a glycosylation site (N-linked (GlcNAc...) asparagine). 3 disulfide bridges follow: C478–C551, C506–C678, and C579–C596.

This sequence belongs to the transferrin family.

The protein localises to the secreted. Functionally, transferrins are iron binding transport proteins which bind Fe(3+) ion in association with the binding of an anion, usually bicarbonate. This transferrin binds only one Fe(3+) ion per protein molecule. The protein is Transferrin of Manduca sexta (Tobacco hawkmoth).